We begin with the raw amino-acid sequence, 199 residues long: Recombination protein RecR (199 aa).

The segment at 57–72 (CSICFNLTDTDPCAIC) adopts a C4-type zinc-finger fold. Positions 80–175 (RLLMVVEEAK…KVTRIAHGLP (96 aa)) constitute a Toprim domain.

It belongs to the RecR family.

May play a role in DNA repair. It seems to be involved in an RecBC-independent recombinational process of DNA repair. It may act with RecF and RecO. This is Recombination protein RecR from Carboxydothermus hydrogenoformans (strain ATCC BAA-161 / DSM 6008 / Z-2901).